Reading from the N-terminus, the 497-residue chain is Lysine--tRNA ligase (497 aa).

E406 and E413 together coordinate Mg(2+).

This sequence belongs to the class-II aminoacyl-tRNA synthetase family. In terms of assembly, homodimer. Mg(2+) is required as a cofactor.

Its subcellular location is the cytoplasm. The catalysed reaction is tRNA(Lys) + L-lysine + ATP = L-lysyl-tRNA(Lys) + AMP + diphosphate. In Rhizobium leguminosarum bv. trifolii (strain WSM2304), this protein is Lysine--tRNA ligase.